A 46-amino-acid chain; its full sequence is Short transmembrane mitochondrial protein 1 (46 aa).

A helical transmembrane segment spans residues glycine 7 to glutamate 23.

This sequence belongs to the STMP1 family. In terms of tissue distribution, widely expressed. Expressed more abundantly in brain compared with other tissues such as heart, muscle and liver.

It localises to the mitochondrion inner membrane. Its subcellular location is the mitochondrion outer membrane. The protein localises to the mitochondrion intermembrane space. Functionally, microprotein involved in mitochondrial respiratory chain complex III (ubiquinol-cytochrome c oxidoreductase) and complex IV (mitochondrial cytochrome c oxidase complex) assembly. Required for the formation of mitochondrial supercomplexes (SCs). Also required for the activation of the NLRP3 inflammasome. The polypeptide is Short transmembrane mitochondrial protein 1 (Danio rerio (Zebrafish)).